A 358-amino-acid chain; its full sequence is Peptide chain release factor 1 (358 aa).

Residue Q233 is modified to N5-methylglutamine.

Belongs to the prokaryotic/mitochondrial release factor family. Post-translationally, methylated by PrmC. Methylation increases the termination efficiency of RF1.

It is found in the cytoplasm. Peptide chain release factor 1 directs the termination of translation in response to the peptide chain termination codons UAG and UAA. The chain is Peptide chain release factor 1 from Brevibacillus brevis (strain 47 / JCM 6285 / NBRC 100599).